We begin with the raw amino-acid sequence, 179 residues long: MSRVGKLPITIPKGVDVSLDEPLLTIKGPKGTLARRMPGDVEVHLEQGAVLIRRKDESNKSRSLHGLVRALVNNMVHGVSEGFVISLEIQGTGYRADAQNNVLNLSLGYSHPIQFVLPEGIKGAVDRNTIRLEGIDKELLGQTAARIRALRPAEPYKGKGIRYAGEHIHRKVGKTGSKK.

Belongs to the universal ribosomal protein uL6 family. In terms of assembly, part of the 50S ribosomal subunit.

This protein binds to the 23S rRNA, and is important in its secondary structure. It is located near the subunit interface in the base of the L7/L12 stalk, and near the tRNA binding site of the peptidyltransferase center. This is Large ribosomal subunit protein uL6 from Syntrophobacter fumaroxidans (strain DSM 10017 / MPOB).